We begin with the raw amino-acid sequence, 485 residues long: Calcium/manganese antiporter SLC30A10 (485 aa).

The Cytoplasmic segment spans residues 1-10; it reads MGRYSGKTCR. Residues 11–31 form a helical membrane-spanning segment; the sequence is LLFMLVLTVAFFVAELVSGYL. Residues 32-40 lie on the Extracellular side of the membrane; sequence GNSIALLSD. A helical transmembrane segment spans residues 41-61; that stretch reads SFNMLSDLISLCVGLSAGYIA. The Cytoplasmic segment spans residues 62–81; the sequence is RRPTRGFSATYGYARAEVVG. A helical membrane pass occupies residues 82–102; sequence ALSNAVFLTALCFTIFVEAVL. Residues 103–113 are Extracellular-facing; that stretch reads RLARPERIDDP. Residues 114–134 traverse the membrane as a helical segment; sequence ELVLIVGVLGLLVNVVGLLIF. The Cytoplasmic portion of the chain corresponds to 135–244; that stretch reads QDCAAWFACC…ALNIRGVLLH (110 aa). The tract at residues 167–196 is disordered; that stretch reads FGGPQGAEDPRRAADPTAPGSDSAVTLRGT. A helical membrane pass occupies residues 245–265; that stretch reads VMGDALGSVVVVITAIIFYVL. The Extracellular segment spans residues 266-278; the sequence is PLKSEDPCNWQCY. The helical transmembrane segment at 279-299 threads the bilayer; sequence IDPSLTVLMVIIILSSAFPLI. The Cytoplasmic segment spans residues 300-485; sequence KETAAILLQM…DQCYVNRTHF (186 aa). Positions 308-485 are required for plasma membrane localization; sequence QMVPKGVNME…DQCYVNRTHF (178 aa).

This sequence belongs to the cation diffusion facilitator (CDF) transporter (TC 2.A.4) family. SLC30A subfamily. Forms homodimers. Forms heterodimers and high-molecular weight oligomers with SLC30A3, SLC30A2 and SLC30A4; heterodimerization is mediated by covalent-bound tyrosine residues, occurs probably in a tissue-specific manner and could mediate the intracellular zinc transport activity into early endosomes and recycling endosomes. In terms of tissue distribution, specifically expressed in fetal liver and fetal brain. Expressed in adult tissues with relative levels small intestine &gt; liver &gt; testes &gt; brain &gt; ovary &gt; colon &gt; cervix &gt; prostate &gt; placenta. Expressed in liver and neurons of the nervous system (at protein level).

The protein localises to the cell membrane. It localises to the golgi apparatus membrane. It is found in the recycling endosome membrane. Its subcellular location is the early endosome membrane. It catalyses the reaction Mn(2+)(out) + Ca(2+)(in) = Mn(2+)(in) + Ca(2+)(out). The enzyme catalyses Zn(2+)(in) = Zn(2+)(out). Calcium:manganese antiporter of the plasma membrane mediating the efflux of intracellular manganese coupled to an active extracellular calcium exchange. Required for intracellular manganese homeostasis, an essential cation for the function of several enzymes, including some crucially important for the metabolism of neurotransmitters and other neuronal metabolic pathways. Manganese can also be cytotoxic and induce oxidative stress, mitochondrial dysfunction and apoptosis. Could also have an intracellular zinc ion transporter activity, directly regulating intracellular zinc ion homeostasis and more indirectly various signaling pathway and biological processes. The polypeptide is Calcium/manganese antiporter SLC30A10 (Homo sapiens (Human)).